Reading from the N-terminus, the 239-residue chain is Tetraspanin-9 (239 aa).

The Cytoplasmic portion of the chain corresponds to 1–12 (MARGCLCCVKYM). Residues 13–33 (LFLFNLLFWLGGCGLLGVGVW) form a helical membrane-spanning segment. Over 34–55 (LSVSQGSFATLSPSFPSISAAN) the chain is Extracellular. The helical transmembrane segment at 56–76 (LIITLGAVIMVTGFLGCLGAI) threads the bilayer. At 77 to 85 (KENKCLLLS) the chain is on the cytoplasmic side. A helical membrane pass occupies residues 86–106 (FFITLLVILLAELILLILFFV). Topologically, residues 107–203 (YTDNVSENAR…VEEWLDDNKH (97 aa)) are extracellular. 2 N-linked (GlcNAc...) asparagine glycosylation sites follow: Asn-110 and Asn-180. A helical transmembrane segment spans residues 204 to 224 (LLGTIAMCVLVIQLLGMAFSM). Residues 225 to 239 (TLYQQIHRSGKKYEA) lie on the Cytoplasmic side of the membrane.

The protein belongs to the tetraspanin (TM4SF) family.

The protein localises to the membrane. The sequence is that of Tetraspanin-9 (tspan9) from Salmo salar (Atlantic salmon).